Here is a 315-residue protein sequence, read N- to C-terminus: Probable HTH-type transcriptional regulator SinR (315 aa).

One can recognise an HTH lysR-type domain in the interval 8-65 (RGMRDWMIFIKVAEVGNLSRAARELDISISAVSKSLSRLENSIEVTLLRRDSHHLELT). Positions 25–44 (LSRAARELDISISAVSKSLS) form a DNA-binding region, H-T-H motif.

It belongs to the LysR transcriptional regulatory family.

In terms of biological role, probable regulatory protein. Its target is not known. This is Probable HTH-type transcriptional regulator SinR (sinR) from Salmonella typhimurium (strain LT2 / SGSC1412 / ATCC 700720).